The following is an 88-amino-acid chain: Small ribosomal subunit protein uS17 (88 aa).

The protein belongs to the universal ribosomal protein uS17 family. In terms of assembly, part of the 30S ribosomal subunit.

Its function is as follows. One of the primary rRNA binding proteins, it binds specifically to the 5'-end of 16S ribosomal RNA. This chain is Small ribosomal subunit protein uS17, found in Oleidesulfovibrio alaskensis (strain ATCC BAA-1058 / DSM 17464 / G20) (Desulfovibrio alaskensis).